Here is a 454-residue protein sequence, read N- to C-terminus: UDP-N-acetylmuramoyl-tripeptide--D-alanyl-D-alanine ligase (454 aa).

116-122 (GSVGKTT) contacts ATP.

The protein belongs to the MurCDEF family. MurF subfamily.

It localises to the cytoplasm. The enzyme catalyses D-alanyl-D-alanine + UDP-N-acetyl-alpha-D-muramoyl-L-alanyl-gamma-D-glutamyl-meso-2,6-diaminopimelate + ATP = UDP-N-acetyl-alpha-D-muramoyl-L-alanyl-gamma-D-glutamyl-meso-2,6-diaminopimeloyl-D-alanyl-D-alanine + ADP + phosphate + H(+). The protein operates within cell wall biogenesis; peptidoglycan biosynthesis. Its function is as follows. Involved in cell wall formation. Catalyzes the final step in the synthesis of UDP-N-acetylmuramoyl-pentapeptide, the precursor of murein. In Synechocystis sp. (strain ATCC 27184 / PCC 6803 / Kazusa), this protein is UDP-N-acetylmuramoyl-tripeptide--D-alanyl-D-alanine ligase.